The chain runs to 207 residues: Cytochrome c biogenesis ATP-binding export protein CcmA (207 aa).

An ABC transporter domain is found at 4–207; it reads LEARELLCER…RISLTQTRAA (204 aa). An ATP-binding site is contributed by 36–43; it reads GSNGAGKT.

Belongs to the ABC transporter superfamily. CcmA exporter (TC 3.A.1.107) family. As to quaternary structure, the complex is composed of two ATP-binding proteins (CcmA) and two transmembrane proteins (CcmB).

Its subcellular location is the cell inner membrane. The enzyme catalyses heme b(in) + ATP + H2O = heme b(out) + ADP + phosphate + H(+). Part of the ABC transporter complex CcmAB involved in the biogenesis of c-type cytochromes; once thought to export heme, this seems not to be the case, but its exact role is uncertain. Responsible for energy coupling to the transport system. The sequence is that of Cytochrome c biogenesis ATP-binding export protein CcmA from Shigella sonnei (strain Ss046).